Consider the following 622-residue polypeptide: UvrABC system protein C (622 aa).

The 80-residue stretch at 13 to 92 folds into the GIY-YIG domain; sequence DKPGVYLMKN…IKKYRPRYNI (80 aa). Positions 204–239 constitute a UVR domain; sequence KDIIRKLKEDMDTLSENMEFEKAAELRDKIFALEKI.

This sequence belongs to the UvrC family. In terms of assembly, interacts with UvrB in an incision complex.

It is found in the cytoplasm. In terms of biological role, the UvrABC repair system catalyzes the recognition and processing of DNA lesions. UvrC both incises the 5' and 3' sides of the lesion. The N-terminal half is responsible for the 3' incision and the C-terminal half is responsible for the 5' incision. This is UvrABC system protein C from Clostridium kluyveri (strain ATCC 8527 / DSM 555 / NBRC 12016 / NCIMB 10680 / K1).